Consider the following 188-residue polypeptide: Peroxidase B (188 aa).

This sequence belongs to the peroxidase family. In terms of processing, partially N-glycosylated.

It is found in the secreted. It catalyses the reaction 2 a phenolic donor + H2O2 = 2 a phenolic radical donor + 2 H2O. The polypeptide is Peroxidase B (Aloe vera (Aloe)).